Reading from the N-terminus, the 282-residue chain is GDT1-like protein 4 (282 aa).

Positions 1-26 (MARRVSTTRLLLLLLLVAAAAAAAAA) are cleaved as a signal peptide. Helical transmembrane passes span 67 to 87 (AGLGLFDAFFASLSMILVSEI), 106 to 126 (TVLSGALSALVVMTILSTGLG), 138 to 158 (TNSAATVLYAFFGLRLLYIAW), 189 to 209 (IFSRFCTPIFLESFVLTFLAE), 227 to 247 (AVGVAVGATLGHTICTSFAVV), and 259 to 279 (GTVATIGGLLFLGFSLSSYFY).

The protein belongs to the GDT1 family.

Its subcellular location is the membrane. The chain is GDT1-like protein 4 from Oryza sativa subsp. japonica (Rice).